Consider the following 694-residue polypeptide: MQTHHDLPVSGVSAGEIASEGYDLDALLNQHFAGRVVRKDLTKQLKEGANVPVYVLEYLLGMYCASDDDDVVEQGLQNVKRILADNYVRPDEAEKVKSLIRERGSYKIIDKVSVKLNQKKDVYEAQLSNLGIKDALVPSQMVKDNEKLLTGGIWCMITVNYFFEEGQKTSPFSLMTLKPIQMPNMDMEEVFDARKHFNRDQWIDVLLRSVGMEPANIEQRTKWHLITRMIPFVENNYNVCELGPRGTGKSHVYKECSPNSLLVSGGQTTVANLFYNMASRQIGLVGMWDVVAFDEVAGITFKDKDGVQIMKDYMASGSFSRGRDSIEGKASMVFVGNINQSVETLVKTSHLLAPFPAAMIDTAFFDRFHAYIPGWEIPKMRPEFFTNRYGLITDYLAEYMREMRKRSFSDAIDKFFKLGNNLNQRDVIAVRRTVSGLLKLMHPDGAYSKEDVRVCLTYAMEVRRRVKEQLKKLGGLEFFDVNFSYIDNETLEEFFVSVPEQGGSELIPAGMPKPGVVHLVTQAESGMTGLYRFETQMTAGNGKHSVSGLGSNTSAKEAIRVGFDYFKGNLNRVSAAAKFSDHEYHLHVVELHNTGPSTATSLAALIALCSILLAKPVQEQMVVLGSMTLGGVINPVQDLAASLQLAFDSGAKRVLLPMSSAMDIPTVPAELFTKFQVSFYSDPVDAVYKALGVN.

Belongs to the BrxL family.

Its function is as follows. BREX systems (bacteriophage exclusion) provide immunity against bacteriophage. Part of a type 1 BREX system which protects against dsDNA phage. This system allows phage adsorption but prevents phage DNA replication, without degradation of the phage DNA. Methylation of bacterial DNA by PglX guides self/non-self discrimination. When the brxA-brxB-brxC-pglX-pglZ-brxL genes are transformed into a susceptible E.coli strain (BW25113) they confer very high resistance to infection by bacteriophage VR7 and VpaE1, about 100-fold protection against lambda, T5 and T7 and no protection against RNA phage Qbeta, ssDNA phage M13 or dSDNA phage T4 and VR5. Glycosylated phage DNA is not susceptible to BREX. The BREX system does not confer resistance to lysogenic lambda phage, i.e. prophage that are integrated into the chromosomal DNA and then induced to form phage. Expression of this protein alone is toxic. The chain is Lon-like protease BrxL from Escherichia coli O9:H4 (strain HS).